Reading from the N-terminus, the 313-residue chain is Ribonuclease HIII (313 aa).

The segment at 63–85 (ARWGTAEPQEKKKTAKKPADPRY) is disordered. Residues 70–82 (PQEKKKTAKKPAD) are compositionally biased toward basic and acidic residues. In terms of domain architecture, RNase H type-2 spans 94–310 (MSVIGSDEVG…TQKAQRLADK (217 aa)). The a divalent metal cation site is built by aspartate 100, glutamate 101, and aspartate 205.

This sequence belongs to the RNase HII family. RnhC subfamily. Interacts with the RNA polymerase core. It depends on Mn(2+) as a cofactor. Mg(2+) serves as cofactor.

It is found in the cytoplasm. The enzyme catalyses Endonucleolytic cleavage to 5'-phosphomonoester.. In terms of biological role, endonuclease that specifically degrades the RNA of RNA-DNA hybrids. The polypeptide is Ribonuclease HIII (rnhC) (Bacillus subtilis (strain 168)).